The sequence spans 410 residues: Putative ankyrin repeat protein FPV240 (410 aa).

ANK repeat units follow at residues 33 to 62 (NGYS…YPDY), 66 to 95 (DIES…FIND), 100 to 129 (KGNT…DTDV), 133 to 162 (DRFT…CTNI), 166 to 195 (YGCT…NIDY), and 200 to 229 (PCVT…DSNI).

This Vertebrata (FPV) protein is Putative ankyrin repeat protein FPV240.